We begin with the raw amino-acid sequence, 404 residues long: Pre-heme d1 synthase (404 aa).

The Radical SAM core domain maps to 22 to 235 (GTPKPVVIWN…LIARALESAE (214 aa)). [4Fe-4S] cluster-binding residues include Cys36, Cys40, Cys43, Cys340, Cys343, Cys349, and Cys371.

Belongs to the radical SAM superfamily. [4Fe-4S] cluster is required as a cofactor.

It participates in porphyrin-containing compound metabolism. Its function is as follows. Involved in heme d1 biosynthesis. Radical SAM enzyme that catalyzes the removal of two propionate side chains from the intermediate 12,18-didecarboxysiroheme (DDSH) and may introduce the keto functions on rings A and B, yielding the heme d1 precursor dihydro-heme d1. The polypeptide is Pre-heme d1 synthase (Dinoroseobacter shibae (strain DSM 16493 / NCIMB 14021 / DFL 12)).